The sequence spans 250 residues: MASRYDRAITVFSPDGHLFQVEYAQEAVKKGSTAVGIRGTNIVVLGVEKKSVAKLQDERTVRKICALDDHVCMAFAGLTADARVVISRARVECQSHKLTVEDPVTVEYITRFIATLKQKYTQSNGRRPFGISALIVGFDDDGIPRLYQTDPSGTYHAWKANAIGRSAKTVREFLEKNYTEDAISNDKEAIKLAIKALLEVVQSGGKNIELAIIRRDQPLKMFSAKEIELEVSEIEREKDEAEKTKSKKST.

Belongs to the peptidase T1A family. Component of the outer alpha-ring of the 20S proteasome core which is composed of 28 subunits that are arranged in four stacked rings, resulting in a barrel-shaped structure. The catalytic chamber with the active sites is on the inside of the barrel. Interacts with canonical subunits of the spermatoproteasome, including proteasome activators PSME4 (also called PA200) and PSME3 (also called PA28-gamma). Interacts with proteasome-interacting proteins chaperones including CCT6B and CCT2, ubiquitin ligases (TRIP12, NEDD4, TRIM36 and RAD18), and ubiquitin specific proteases such as USP9X, USP34, USP5 and USP47. Interacts with meiotic proteins cyclin dependent kinase CDK1 and the ATPase TRIP13 as well as proteins of the synaptonemal complex SIX6OS1 and SYCE3.

The protein resides in the nucleus. Component of the spermatoproteasome, a proteasome specifically found in testis that promotes acetylation-dependent degradation of histones, thereby participating actively to the exchange of histones during spermatogenesis. The proteasome is a protein complex that degrades unneeded or damaged proteins by proteolysis, a chemical reaction that breaks peptide bonds. Required for 20S core proteasome assembly, essential for the degradation of meiotic proteins RAD51 and RPA1 at late prophase I and the progression of meiosis I during spermatogenesis. Localizes to the synaptonemal complex, a 'zipper'-like structure that holds homologous chromosome pairs in synapsis during meiotic prophase I. The protein is Proteasome subunit alpha type-8 of Mus musculus (Mouse).